We begin with the raw amino-acid sequence, 1380 residues long: Mitogen-activated protein kinase kinase kinase 5 (1380 aa).

Residues 30 to 97 (CRRGGGAATA…GNSGSGGGRR (68 aa)) are disordered. The segment covering 37–49 (ATAAEGEPSLQPL) has biased composition (low complexity). The segment covering 50–59 (LVPPPPPPPG) has biased composition (pro residues). Asymmetric dimethylarginine occurs at positions 85 and 87. Ser-90 is subject to Phosphoserine; by PIM1 and PKB/AKT1. An interaction with PPIA/CYPA region spans residues 649 to 1374 (HCKRFFEMVN…MLCTLWKAII (726 aa)). The Protein kinase domain maps to 687 to 945 (NGDRVVLGKG…ANDLLIDEFL (259 aa)). ATP contacts are provided by residues 693-701 (LGKGTYGIV) and Lys-716. At Tyr-725 the chain carries Phosphotyrosine. Catalysis depends on Asp-810, which acts as the Proton acceptor. Residue Thr-820 is modified to Phosphothreonine; by autocatalysis. Thr-845 carries the post-translational modification Phosphothreonine; by autocatalysis, MELK and MAP3K6. At Thr-849 the chain carries Phosphothreonine; by autocatalysis. Phosphoserine is present on Ser-965. Ser-973 bears the Phosphoserine; by autocatalysis mark. Phosphoserine is present on residues Ser-1036 and Ser-1040. The tract at residues 1188–1215 (ASESDTADPEDLDVEDEHEELSSNQTVR) is disordered. A compositionally biased stretch (acidic residues) spans 1192–1206 (DTADPEDLDVEDEHE). Positions 1252–1292 (LGRMKIETNRLLEELVRKERELQALLHQAIEEKDQEIRHLK) form a coiled coil.

The protein belongs to the protein kinase superfamily. STE Ser/Thr protein kinase family. MAP kinase kinase kinase subfamily. As to quaternary structure, homodimer when inactive. Binds both upstream activators and downstream substrates in multimolecular complexes. Part of a cytoplasmic complex made of HIPK1, DAB2IP and MAP3K5 in response to TNF. This complex formation promotes MAP3K5-JNK activation and subsequent apoptosis. Interacts with SOCS1 which recognizes phosphorylation of Tyr-725 and induces MAP3K5/ASK1 degradation in endothelial cells. Interacts with the 14-3-3 family proteins such as YWHAB, YWHAE, YWHAQ, YWHAH, YWHAZ and SFN. Interacts with ARRB2, BIRC2, DAB2IP, IGF1R, MAP3K6/ASK2, PIM1, PGAM5, SOCS1, STUB1, TRAF2 and TXN. Interacts with ERN1 in a TRAF2-dependent manner. Interacts with calcineurin subunit PPP3R1, PPP5C, PPM1L and TRAF6. Interacts (via N-terminus) with RAF1 and this interaction inhibits the proapoptotic function of MAP3K5. Interacts with DAB2IP (via N-terminus C2 domain); the interaction occurs in a TNF-alpha-dependent manner. Interacts with DUSP13A; may positively regulate apoptosis. Interacts with PPIA/CYPA. Interacts with PRMT1; the interaction results in MAP3K5 methylation by PRMT1 which inhibits MAP3K5 activation. Interacts with TRAF2; the interaction is inhibited by PRMT1. Interacts with TRIM48. The cofactor is Mg(2+). Post-translationally, ser-90 and Ser-1040 are inactivating phosphorylation sites, the former of which is phosphorylated by AKT1. Phosphorylated at Ser-973 which induces association of MAP3K5/ASK1 with the 14-3-3 family proteins and suppresses MAP3K5/ASK1 activity. Calcineurin (CN) dephosphorylates this site. Also dephosphorylated and activated by PGAM5. Phosphorylated at Thr-845 through autophosphorylation and by MAP3K6/ASK2 which leads to activation. Thr-845 is dephosphorylated by PPP5C. Phosphorylation at Ser-973 in response to oxidative stress is negatively regulated by PPIA/CYPA. Ubiquitinated. Tumor necrosis factor (TNF) induces TNFR2-dependent ubiquitination, leading to proteasomal degradation. Ubiquitinated by RC3H2 in a TRIM48-dependent manner. In terms of processing, methylation at Arg-85 and Arg-87 by PRMT1 promotes association of MAP3K5 with thioredoxin and negatively regulates MAP3K5 association with TRAF2, inhibiting MAP3K5 activation. Methylation is blocked by ubiquitination of PRMT1 by TRIM48. Expressed in various adult mouse tissues including heart, brain, lung, liver and kidney.

It localises to the cytoplasm. The protein localises to the endoplasmic reticulum. It carries out the reaction L-seryl-[protein] + ATP = O-phospho-L-seryl-[protein] + ADP + H(+). The catalysed reaction is L-threonyl-[protein] + ATP = O-phospho-L-threonyl-[protein] + ADP + H(+). With respect to regulation, activated by various stressors, including oxidative stress, endoplasmic reticulum stress, and calcium overload, as well as by receptor-mediated inflammatory signals, such as the tumor necrosis factor (TNF) and lipopolysaccharide (LPS). Homophilic association of MAP3K5/ASK1 through the C-terminal coiled-coil domains and the heteromeric complex formation of MAP3K5/ASK1 with the reduced form of thioredoxin (TXN), constitutes an inactive form of the kinase. Upon ROS-induced dissociation of TXN from MAP3K5/ASK1, TRAF2 and TRAF6 are reciprocally recruited to MAP3K5/ASK1 and form the active MAP3K5/ASK1 signalosome, in which TRAF2 and TRAF6 appear to facilitate the active configuration of MAP3K5/ASK1. MAP3K5/ASK1 activity is also regulated through several phosphorylation and dephosphorylation events. Thr-845 is an activating phosphorylation site that is autophosphorylated and phosphorylated by MAP3K6/ASK2 and dephosphorylated by PPP5C. Ser-90 and Ser-1040 are inactivating phosphorylation sites, the former of which is phosphorylated by AKT1. Phosphorylation of Ser-973 induces association of MAP3K5/ASK1 with the 14-3-3 family proteins, which suppresses MAP3K5/ASK1 activity. Calcium/calmodulin-activated protein phosphatase calcineurin (PPP3CA) has been shown to directly dephosphorylate this site. SOCS1 binds to ASK1 by recognizing phosphorylation of Tyr-725 and induces MAP3K5/ASK1 degradation in endothelial cells. Also dephosphorylated and activated by PGAM5. Contains an N-terminal autoinhibitory domain. In terms of biological role, serine/threonine kinase which acts as an essential component of the MAP kinase signal transduction pathway. Plays an important role in the cascades of cellular responses evoked by changes in the environment. Mediates signaling for determination of cell fate such as differentiation and survival. Plays a crucial role in the apoptosis signal transduction pathway through mitochondria-dependent caspase activation. MAP3K5/ASK1 is required for the innate immune response, which is essential for host defense against a wide range of pathogens. Mediates signal transduction of various stressors like oxidative stress as well as by receptor-mediated inflammatory signals, such as the tumor necrosis factor (TNF) or lipopolysaccharide (LPS). Once activated, acts as an upstream activator of the MKK/JNK signal transduction cascade and the p38 MAPK signal transduction cascade through the phosphorylation and activation of several MAP kinase kinases like MAP2K4/SEK1, MAP2K3/MKK3, MAP2K6/MKK6 and MAP2K7/MKK7. These MAP2Ks in turn activate p38 MAPKs and c-jun N-terminal kinases (JNKs). Both p38 MAPK and JNKs control the transcription factors activator protein-1 (AP-1). The chain is Mitogen-activated protein kinase kinase kinase 5 (Map3k5) from Mus musculus (Mouse).